The sequence spans 370 residues: 2-aminoethylphosphonate--pyruvate transaminase (370 aa).

Lys194 carries the N6-(pyridoxal phosphate)lysine modification.

This sequence belongs to the class-V pyridoxal-phosphate-dependent aminotransferase family. PhnW subfamily. Homodimer. The cofactor is pyridoxal 5'-phosphate.

The enzyme catalyses (2-aminoethyl)phosphonate + pyruvate = phosphonoacetaldehyde + L-alanine. Involved in phosphonate degradation. This Paraburkholderia phymatum (strain DSM 17167 / CIP 108236 / LMG 21445 / STM815) (Burkholderia phymatum) protein is 2-aminoethylphosphonate--pyruvate transaminase.